We begin with the raw amino-acid sequence, 328 residues long: MLLSSSMPLNLGKRIFGYNSYLLTDIIIYHIVINNKWIQYFLGIRLIKAYVPCEKCSYEKVAEYENFKITHNLFDADVCIDDPVLFLKRIKGLEDEVTCLLWGDTVYDALYYKNEMAKYDNVIMASYWNYQMFEKLGYKIKGVMKRHIKPIFVGEKKDKIFVTLGESRYFDRKNLTLIDKITREFGVRDKTIIIGNLGNPDYPTFQLSEEEKYRLYARSKFFLALSKSEGFGIPPIEAMALGVVPIYLDAHGYKENLVGIPIDPIDEYTYCVDNKHCFRVWDLSIHELRYEINHALTIGKDEYEDLSEKAKNKARGYIIATMESSDFR.

This sequence belongs to the glycosyltransferase group 1 family. Glycosyltransferase 4 subfamily.

The protein is Putative glycosyltransferase 41 (SIFV0041) of Sulfolobus islandicus filamentous virus (isolate Iceland/Hveragerdi) (SIFV).